The primary structure comprises 872 residues: Metabotropic glutamate receptor 2 (872 aa).

Residues Met1–Ala18 form the signal peptide. Residues Glu19–Trp567 are Extracellular-facing. An intrachain disulfide couples Cys50 to Cys92. Residues Arg57, Arg61, Ser145, Ala166, and Thr168 each contribute to the L-glutamate site. Asn203 and Asn286 each carry an N-linked (GlcNAc...) asparagine glycan. Disulfide bonds link Cys234/Cys518, Cys355/Cys362, Cys400/Cys407, Cys500/Cys519, Cys504/Cys522, Cys525/Cys537, and Cys540/Cys553. Position 295 (Asp295) interacts with L-glutamate. An N-linked (GlcNAc...) asparagine glycan is attached at Asn338. An L-glutamate-binding site is contributed by Lys377. N-linked (GlcNAc...) asparagine glycosylation occurs at Asn402. Asn547 carries an N-linked (GlcNAc...) asparagine glycan. The chain crosses the membrane as a helical span at residues Ala568–Val590. Over Arg591–Glu604 the chain is Cytoplasmic. A helical transmembrane segment spans residues Leu605–Ala625. Topologically, residues Lys626–Arg636 are extracellular. A disulfide bridge links Cys632 with Cys721. A helical transmembrane segment spans residues Leu637–Asn655. Residues Arg656–Gln679 are Cytoplasmic-facing. Positions Ala677–Ala685 are important for interaction with HTR2A. The helical transmembrane segment at Val680 to Val700 threads the bilayer. The Extracellular portion of the chain corresponds to Glu701–Asp725. Residues Ala726 to Phe747 traverse the membrane as a helical segment. The Cytoplasmic segment spans residues Lys748–Lys760. A helical transmembrane segment spans residues Phe761–Thr783. Residues Ser784–Thr793 lie on the Extracellular side of the membrane. A helical membrane pass occupies residues Met794 to Phe819. At Gln820 to Leu872 the chain is on the cytoplasmic side.

This sequence belongs to the G-protein coupled receptor 3 family. As to quaternary structure, forms heterodimers with GRM3 or GRM4. Interacts with TAMALIN. Interacts with HTR2A. In terms of assembly, (Microbial infection) Interacts with H5N6 virus protein HA. (Microbial infection) Interacts with rabies virus protein G. As to quaternary structure, (Microbial infection) Interacts with SARS-CoV-2 virus spike protein S. Detected in brain cortex (at protein level). Widely expressed in different regions of the adult brain as well as in fetal brain.

The protein resides in the cell membrane. It localises to the synapse. Its subcellular location is the cell projection. It is found in the dendrite. Functionally, dimeric G protein-coupled receptor which is activated by the excitatory neurotransmitter L-glutamate. Plays critical roles in modulating synaptic transmission and neuronal excitability. Upon activation by glutamate, inhibits presynaptic calcium channels, reducing further glutamate release and dampening excitatory signaling. Mechanistically, ligand binding causes a conformation change that triggers signaling via guanine nucleotide-binding proteins (G proteins) and modulates the activity of down-stream effectors, such as adenylate cyclase. May mediate suppression of neurotransmission or may be involved in synaptogenesis or synaptic stabilization. Its function is as follows. (Microbial infection) Plays an important role in influenza virus internalization. In terms of biological role, (Microbial infection) Acts as a host entry factor for rabies virus that hijacks the endocytosis of GRM2 to enter cells. (Microbial infection) Acts as a host entry factor for SARS-CoV-2 that hijacks the endocytosis of GRM2 to enter cells. This is Metabotropic glutamate receptor 2 from Homo sapiens (Human).